The following is a 1507-amino-acid chain: Protein TIC 214 (1507 aa).

The next 6 membrane-spanning stretches (helical) occupy residues 4–24 (IYLV…LPIG), 53–73 (TILL…VLAL), 81–101 (LWVK…IYLY), 129–149 (AFLE…NPVF), 163–183 (ISTF…IFFL), and 202–222 (LVKI…SFLC).

Belongs to the TIC214 family. Part of the Tic complex.

The protein resides in the plastid. Its subcellular location is the chloroplast inner membrane. Functionally, involved in protein precursor import into chloroplasts. May be part of an intermediate translocation complex acting as a protein-conducting channel at the inner envelope. The sequence is that of Protein TIC 214 from Staurastrum punctulatum (Green alga).